The primary structure comprises 506 residues: Gamma-aminobutyric acid receptor subunit epsilon (506 aa).

The N-terminal stretch at 1–22 (MLSKVLPVLLGILLILQSRVEG) is a signal peptide. The tract at residues 23-66 (PQTESKNEASSRDVVYGPQPQPLENQLLSEETKSTETETGSRVG) is disordered. At 23-280 (PQTESKNEAS…FNVSRRFGYV (258 aa)) the chain is on the extracellular side. An N-linked (GlcNAc...) asparagine glycan is attached at Asn-134. Cys-195 and Cys-209 are oxidised to a cystine. N-linked (GlcNAc...) asparagine glycosylation occurs at Asn-252. Residues 281–301 (AFQNYVPSSVTTMLSWVSFWI) form a helical membrane-spanning segment. The Cytoplasmic segment spans residues 302 to 307 (KTESAP). A helical membrane pass occupies residues 308-327 (ARTSLGITSVLTMTTLGTFS). Over 328 to 343 (RKNFPRVSYITALDFY) the chain is Extracellular. A helical membrane pass occupies residues 344 to 364 (IAICFVFCFCALLEFAVLNFL). Residues 365–485 (IYNQTKAHAS…HVYRLDNYSR (121 aa)) lie on the Cytoplasmic side of the membrane. The tract at residues 413 to 438 (EGSDGEERPSCSAQQPPSPGSPEGPR) is disordered. Residues 486 to 506 (VVFPVTFFFFNVLYWLVCLNL) form a helical membrane-spanning segment.

The protein belongs to the ligand-gated ion channel (TC 1.A.9) family. Gamma-aminobutyric acid receptor (TC 1.A.9.5) subfamily. GABRE sub-subfamily. In terms of assembly, heteropentamer, formed by a combination of alpha (GABRA1-6), beta (GABRB1-3), gamma (GABRG1-3), delta (GABRD), epsilon (GABRE), rho (GABRR1-3), pi (GABRP) and theta (GABRQ) chains, each subunit exhibiting distinct physiological and pharmacological properties. As to expression, expressed in many tissues. Highest levels of expression in adult heart and placenta.

Its subcellular location is the cell membrane. The protein resides in the postsynaptic cell membrane. It carries out the reaction chloride(in) = chloride(out). Its activity is regulated as follows. Potentiated by pentobarbital, loreclezole, and lanthanum and inhibited by zinc and furosemide. Introduction of the epsilon subunit to the receptor complex resulted in diminished modulatory effects by etomidate, propofol, pregnanolone and flurazepam. In terms of biological role, epsilon subunit of the heteropentameric ligand-gated chloride channel gated by gamma-aminobutyric acid (GABA), a major inhibitory neurotransmitter in the brain. GABA-gated chloride channels, also named GABA(A) receptors (GABAAR), consist of five subunits arranged around a central pore and contain GABA active binding site(s) located at the alpha and beta subunit interfaces. When activated by GABA, GABAARs selectively allow the flow of chloride anions across the cell membrane down their electrochemical gradient. GABAARs containing epsilon subunits also permit spontaneous chloride channel activity while preserving the structural information required for GABA-gated openings. GABARs containing epsilon subunit may regulate cardiac function. The protein is Gamma-aminobutyric acid receptor subunit epsilon of Homo sapiens (Human).